We begin with the raw amino-acid sequence, 1394 residues long: Ninein-like protein (1394 aa).

2 EF-hand domains span residues 8–43 (HYVSRLRDVYSSCDTTGTGFLDQEELTQLCTKLGLE) and 42–77 (LEEQLPALLHILLGDDRLARVNFEEFKEGFVAVLSS). 2 disordered regions span residues 77–99 (SGSGVEPSDEEGSSSESATSCAV) and 126–166 (KYGS…KEPQ). Ser149 is subject to Phosphoserine. Positions 151–166 (ESLKSDEDAESAKEPQ) are enriched in basic and acidic residues. 2 consecutive EF-hand domains span residues 197 to 232 (TPENLVQGIWHELGIGSSGHLNEQELAVVCRSIGLH) and 234 to 269 (LEKQELEELFSKLDQDGDGRVSLAEFQLGLFGHEPP). 5 residues coordinate Ca(2+): Asp247, Asp249, Asp251, Arg253, and Glu258. 3 coiled-coil regions span residues 382–423 (RQEL…MDDC), 461–515 (WEQA…DSEK), and 544–584 (EQFT…SRQS). A KEN box motif is present at residues 494–496 (KEN). Residues 578 to 602 (LPRSRQSPAGTPGTHRRRIPGRGPA) are disordered. The D-box motif lies at 632–640 (RMQLETKVN). Residues 835-863 (EKEKLEQTYREQVEGLVQEADVLRALLKN) adopt a coiled-coil conformation. The segment covering 866-893 (TVVSDQQERTPSSMSLGPDSRQQPTARQ) has biased composition (polar residues). Positions 866-977 (TVVSDQQERT…SARTLTGQGQ (112 aa)) are disordered. Over residues 939 to 951 (RSSENLGVRDNHQ) the composition is skewed to basic and acidic residues. Coiled-coil stretches lie at residues 1057 to 1229 (SESE…ELTE) and 1269 to 1331 (GARV…LRKQ).

As to quaternary structure, interacts with gamma-tubulin and TUBGCP4. Interacts with anaphase promoting complex/cyclosome (APC/C). Interacts with CDC20 and FZR1. Interacts with LCA5 and USH2A. In terms of processing, phosphorylated by PLK1 which disrupts its centrosome association and interaction with gamma-tubulin. Post-translationally, ubiquitinated by the APC/C complex leading to its degradation.

Its subcellular location is the cytoplasm. It is found in the cytoskeleton. The protein localises to the microtubule organizing center. It localises to the centrosome. In terms of biological role, involved in the microtubule organization in interphase cells. Overexpression induces the fragmentation of the Golgi, and causes lysosomes to disperse toward the cell periphery; it also interferes with mitotic spindle assembly. Involved in vesicle transport in photoreceptor cells. This is Ninein-like protein (Ninl) from Mus musculus (Mouse).